Consider the following 120-residue polypeptide: Large ribosomal subunit protein uL18 (120 aa).

The protein belongs to the universal ribosomal protein uL18 family. Part of the 50S ribosomal subunit; part of the 5S rRNA/L5/L18/L25 subcomplex. Contacts the 5S and 23S rRNAs.

In terms of biological role, this is one of the proteins that bind and probably mediate the attachment of the 5S RNA into the large ribosomal subunit, where it forms part of the central protuberance. The protein is Large ribosomal subunit protein uL18 of Nitrobacter hamburgensis (strain DSM 10229 / NCIMB 13809 / X14).